Consider the following 338-residue polypeptide: Isopentenyl-diphosphate delta-isomerase (338 aa).

13–14 (RK) serves as a coordination point for substrate. Residues 72-74 (AMT), Ser-102, and Asn-130 each bind FMN. Position 102 to 104 (102 to 104 (SQR)) interacts with substrate. Residue Gln-165 coordinates substrate. Glu-166 is a binding site for Mg(2+). Residues Lys-197, Thr-227, 274 to 276 (GIR), and 295 to 296 (AR) contribute to the FMN site.

The protein belongs to the IPP isomerase type 2 family. Homooctamer. Dimer of tetramers. The cofactor is FMN. NADPH is required as a cofactor. Requires Mg(2+) as cofactor.

It is found in the cytoplasm. It carries out the reaction isopentenyl diphosphate = dimethylallyl diphosphate. In terms of biological role, involved in the biosynthesis of isoprenoids. Catalyzes the 1,3-allylic rearrangement of the homoallylic substrate isopentenyl (IPP) to its allylic isomer, dimethylallyl diphosphate (DMAPP). The chain is Isopentenyl-diphosphate delta-isomerase from Deinococcus radiodurans (strain ATCC 13939 / DSM 20539 / JCM 16871 / CCUG 27074 / LMG 4051 / NBRC 15346 / NCIMB 9279 / VKM B-1422 / R1).